A 300-amino-acid polypeptide reads, in one-letter code: Probable endonuclease 4 (300 aa).

The Zn(2+) site is built by His68, His109, Glu144, Asp178, His181, His213, Asp226, His228, and Glu258.

This sequence belongs to the AP endonuclease 2 family. Zn(2+) is required as a cofactor.

It catalyses the reaction Endonucleolytic cleavage to 5'-phosphooligonucleotide end-products.. Functionally, endonuclease IV plays a role in DNA repair. It cleaves phosphodiester bonds at apurinic or apyrimidinic (AP) sites, generating a 3'-hydroxyl group and a 5'-terminal sugar phosphate. The protein is Probable endonuclease 4 of Latilactobacillus sakei subsp. sakei (strain 23K) (Lactobacillus sakei subsp. sakei).